The following is a 699-amino-acid chain: Protein phosphatase 1 regulatory subunit 37 (699 aa).

A compositionally biased stretch (pro residues) spans 1–12 (MEIPPQEAPPGP). Positions 1–42 (MEIPPQEAPPGPGADGEAEEAPVEAPSPGPASPPADGRLKAA) are disordered. Residues serine 50 and serine 56 each carry the phosphoserine modification. 5 LRR repeats span residues 220-240 (SLAV…MLLA), 248-269 (TLRE…AQLG), 277-297 (SLQI…AYIC), 306-326 (GLAT…AFLG), and 334-354 (SLET…RNLK). The segment at 467 to 667 (RLQLSASMPE…PPGPEAKVGS (201 aa)) is disordered. A compositionally biased stretch (acidic residues) spans 510–525 (SDSDSDSEGEDRDEAD). Serine 566 carries the phosphoserine modification. Pro residues-rich tracts occupy residues 588-613 (PPVP…PFPT) and 622-642 (DPGP…PPLP).

The protein belongs to the PPP1R37 family. In terms of assembly, interacts with PPP1CA.

Its function is as follows. Inhibits phosphatase activity of protein phosphatase 1 (PP1) complexes. In Bos taurus (Bovine), this protein is Protein phosphatase 1 regulatory subunit 37 (PPP1R37).